The chain runs to 119 residues: Holo-[acyl-carrier-protein] synthase (119 aa).

Positions 8 and 58 each coordinate Mg(2+).

This sequence belongs to the P-Pant transferase superfamily. AcpS family. Mg(2+) serves as cofactor.

The protein resides in the cytoplasm. It catalyses the reaction apo-[ACP] + CoA = holo-[ACP] + adenosine 3',5'-bisphosphate + H(+). Functionally, transfers the 4'-phosphopantetheine moiety from coenzyme A to a Ser of acyl-carrier-protein. This Limosilactobacillus fermentum (strain NBRC 3956 / LMG 18251) (Lactobacillus fermentum) protein is Holo-[acyl-carrier-protein] synthase.